Reading from the N-terminus, the 388-residue chain is (S)-8-oxocitronellyl enol synthase (388 aa).

NADP(+)-binding positions include 38–40 (TGI), 66–67 (RR), 84–85 (DV), 108–109 (SW), and Q142. Residues K146 and Y178 contribute to the active site. Residues K146 and Y178 each coordinate substrate. Residues Y178, V204, and 211–213 (SMM) contribute to the NADP(+) site. Residue S349 participates in substrate binding.

The protein belongs to the short-chain dehydrogenases/reductases (SDR) family. Highly divergent. As to quaternary structure, homodimer. In terms of tissue distribution, expressed in internal phloem-associated parenchyma (IPAP) cells.

Its subcellular location is the cytoplasm. It localises to the cytosol. The catalysed reaction is (S)-8-oxocitronellyl enol + NADP(+) = (6E)-8-oxogeranial + NADPH + H(+). The enzyme catalyses (S)-8-oxocitronellyl enol + NAD(+) = (6E)-8-oxogeranial + NADH + H(+). Functionally, iridoid synthase that catalyzes the first step in generation of the iridoid ring scaffold using the linear monoterpene (6E)-8-oxogeranial as substrate. Iridoids comprise a large family of distinctive bicyclic monoterpenes that possess a wide range of pharmacological activities, including anticancer, anti-inflammatory, antifungal and antibacterial activities. This chain is (S)-8-oxocitronellyl enol synthase, found in Catharanthus roseus (Madagascar periwinkle).